Here is an 802-residue protein sequence, read N- to C-terminus: Leucine--tRNA ligase (802 aa).

Residues 40-51 carry the 'HIGH' region motif; sequence PYPSGAGLHVGH. Residues 576–580 carry the 'KMSKS' region motif; the sequence is KMSKS. Position 579 (lysine 579) interacts with ATP.

The protein belongs to the class-I aminoacyl-tRNA synthetase family.

The protein localises to the cytoplasm. It catalyses the reaction tRNA(Leu) + L-leucine + ATP = L-leucyl-tRNA(Leu) + AMP + diphosphate. The polypeptide is Leucine--tRNA ligase (Bacillus cereus (strain G9842)).